Reading from the N-terminus, the 465-residue chain is MAKKAPDVGDYKYGFHDDDVSIFRSERGLTENIVREISNMKNEPEWMLDFRLKSLKLFYKMPMPQWGGDLSELNFDDITYYVKPSEQAERSWDEVPEEIKRTFDKLGIPEAEQKYLAGVSAQYESEVVYHNMEKELEEKGIIFKDTDSALQENEELFKKYFASVVPAADNKFAALNSAVWSGGSFIYVPKNIKLDTPLQAYFRINSENMGQFERTLIIADEGASVHYVEGCTAPVYTTSSLHSAVVEIIVHKDAHVRYTTIQNWANNVYNLVTKRTFVYENGNMEWVDGNLGSKLTMKYPNCVLLGEGAKGSTLSIAFAGKGQVQDAGAKMIHKAPNTSSTIVSKSISKNGGKVIYRGIVHFGRKAKGARSNIECDTLILDNESTSDTIPYNEVFNDQISLEHEAKVSKVSEEQLFYLMSRGISEEEATEMIVMGFIEPFTKELPMEYAVEMNRLIKFEMEGSIG.

Belongs to the iron-sulfur cluster assembly SufBD family.

The chain is Iron-sulfur cluster assembly SufBD family protein SAUSA300_0822 from Staphylococcus aureus (strain USA300).